Consider the following 326-residue polypeptide: Transposase for insertion sequence element IS4351 (326 aa).

The Integrase catalytic domain maps to 156 to 317; it reads IDERPEIVEL…TPNEKFKQII (162 aa).

The protein belongs to the transposase IS30 family.

Functionally, required for the transposition of the insertion element. The chain is Transposase for insertion sequence element IS4351 from Bacteroides fragilis.